The chain runs to 714 residues: Kinesin-like protein KIN-13 (714 aa).

The 63-residue stretch at Met1–Arg63 folds into the SAM domain. The span at Gln69–Gln81 shows a compositional bias: polar residues. Disordered regions lie at residues Gln69–Gln109 and Gly122–Gly161. Positions Ser82–Val92 are enriched in low complexity. Pro residues predominate over residues Pro151–Arg160. A Kinesin motor domain is found at Arg183–Leu515. Gly273 to Ser280 contacts ATP.

The protein belongs to the TRAFAC class myosin-kinesin ATPase superfamily. Kinesin family. KIN-13 subfamily. As to quaternary structure, interacts with PLK. In terms of processing, phosphorylated by PLK.

The protein resides in the cytoplasm. It is found in the cytoskeleton. The protein localises to the cell projection. Its subcellular location is the cilium. It localises to the flagellum. The protein resides in the flagellum basal body. It is found in the flagellum axoneme. The protein localises to the spindle. Its subcellular location is the chromosome. It localises to the centromere. The protein resides in the kinetochore. Involved in cell cycle. Involved in formation of flagella, regulation of flagellar length, and formation of median bodies during interphase. Regulates flagellar length in all eight distal flagellar tips by promoting disassembly of the microtubules. Disassembles microtubules at the distal flagellar tips in a length-dependent manner in order to maintain different equilibrium lengths of the four flagellar pairs. Regulates interphase and mitotic microtubule dynamics. Regulates microtubule disassembly dynamics of the dual mitotic spindles and the median body. The sequence is that of Kinesin-like protein KIN-13 from Giardia intestinalis (strain ATCC 50803 / WB clone C6) (Giardia lamblia).